Here is a 584-residue protein sequence, read N- to C-terminus: DNA mismatch repair protein MutL (584 aa).

The protein belongs to the DNA mismatch repair MutL/HexB family.

Its function is as follows. This protein is involved in the repair of mismatches in DNA. It is required for dam-dependent methyl-directed DNA mismatch repair. May act as a 'molecular matchmaker', a protein that promotes the formation of a stable complex between two or more DNA-binding proteins in an ATP-dependent manner without itself being part of a final effector complex. In Syntrophomonas wolfei subsp. wolfei (strain DSM 2245B / Goettingen), this protein is DNA mismatch repair protein MutL.